The sequence spans 434 residues: Ribosomal protein uS12 methylthiotransferase RimO (434 aa).

The 111-residue stretch at 2–112 (AKIGFVSLGC…VLEAVQEVLP (111 aa)) folds into the MTTase N-terminal domain. [4Fe-4S] cluster-binding residues include C11, C47, C76, C142, C146, and C149. The 238-residue stretch at 128–365 (LTPRHYAYVK…LEVQARVSLR (238 aa)) folds into the Radical SAM core domain. A TRAM domain is found at 368-434 (QRFVGKTLEV…DTYDLHGVQA (67 aa)).

Belongs to the methylthiotransferase family. RimO subfamily. [4Fe-4S] cluster is required as a cofactor.

The protein localises to the cytoplasm. The catalysed reaction is L-aspartate(89)-[ribosomal protein uS12]-hydrogen + (sulfur carrier)-SH + AH2 + 2 S-adenosyl-L-methionine = 3-methylsulfanyl-L-aspartate(89)-[ribosomal protein uS12]-hydrogen + (sulfur carrier)-H + 5'-deoxyadenosine + L-methionine + A + S-adenosyl-L-homocysteine + 2 H(+). In terms of biological role, catalyzes the methylthiolation of an aspartic acid residue of ribosomal protein uS12. This Thermus thermophilus (strain ATCC BAA-163 / DSM 7039 / HB27) protein is Ribosomal protein uS12 methylthiotransferase RimO.